Here is a 96-residue protein sequence, read N- to C-terminus: Citrate lyase acyl carrier protein (96 aa).

O-(phosphoribosyl dephospho-coenzyme A)serine is present on Ser14.

This sequence belongs to the CitD family. As to quaternary structure, oligomer with a subunit composition of (alpha,beta,gamma)6.

The protein localises to the cytoplasm. Its function is as follows. Covalent carrier of the coenzyme of citrate lyase. In Lactococcus lactis subsp. lactis (strain IL1403) (Streptococcus lactis), this protein is Citrate lyase acyl carrier protein.